Consider the following 458-residue polypeptide: ATP synthase subunit beta (458 aa).

148–155 (GGAGVGKT) is an ATP binding site.

Belongs to the ATPase alpha/beta chains family. As to quaternary structure, F-type ATPases have 2 components, CF(1) - the catalytic core - and CF(0) - the membrane proton channel. CF(1) has five subunits: alpha(3), beta(3), gamma(1), delta(1), epsilon(1). CF(0) has three main subunits: a(1), b(2) and c(9-12). The alpha and beta chains form an alternating ring which encloses part of the gamma chain. CF(1) is attached to CF(0) by a central stalk formed by the gamma and epsilon chains, while a peripheral stalk is formed by the delta and b chains.

The protein resides in the cell inner membrane. It catalyses the reaction ATP + H2O + 4 H(+)(in) = ADP + phosphate + 5 H(+)(out). Produces ATP from ADP in the presence of a proton gradient across the membrane. The catalytic sites are hosted primarily by the beta subunits. The chain is ATP synthase subunit beta from Pseudomonas putida (strain GB-1).